The following is a 488-amino-acid chain: MTKVFALGWLLKINLMKTLYSLRRFYHVETPFNTTVGVGGRDIESTGFAWWSGNARLINVSGKLLGAHVAHAGIMVFWTGAMTLFEVAHFVPEKPLYEQGFILIPHLATLGWGVGPGGEIFNTYPYFVVGVVHLISSAVLGFGGLYHSLIGPDTLEESFPFFGYDWRDKNKMTTILGIHLVLLGIGAFLLVIKALFIGGVYDTWAPGGGDVRFVSNPTLNPLVIFGYVLKSPFGGDGWIVSVNNMEDLVGGHVWIGIICIAGGIWHILTKPFAWARRAFVWSGEAYLSYSLGALSIMGLTASNFVWYNNTAYPSEFYGPTGPEASQAQAFTFLVRDQRLGANVASSQGPTGLGKYLMRSPSGEIIFGGETMRFWDLRAPWVEPLRGPNGLDLNKIKNDIQPWQERRAAEYMTHAPLGSLNSVGGVATEINSVNYVSPRSWLTTSHSFLGFFLFIGHLWHAGRARAAAAGFEKGINRENEPVLSMRPLD.

Positions 1–29 are excised as a propeptide; sequence MTKVFALGWLLKINLMKTLYSLRRFYHVE. The next 5 helical transmembrane spans lie at 84–108, 149–170, 193–215, 270–290, and 306–327; these read LFEV…PHLA, LIGP…RDKN, KALF…RFVS, KPFA…LSYS, and WYNN…ASQA. Residue Glu382 coordinates [CaMn4O5] cluster. Residues 462-486 traverse the membrane as a helical segment; that stretch reads RARAAAAGFEKGINRENEPVLSMRP.

This sequence belongs to the PsbB/PsbC family. PsbC subfamily. In terms of assembly, PSII is composed of 1 copy each of membrane proteins PsbA, PsbB, PsbC, PsbD, PsbE, PsbF, PsbH, PsbI, PsbJ, PsbK, PsbL, PsbM, PsbT, PsbX, PsbY, PsbZ, Psb30/Ycf12, at least 3 peripheral proteins of the oxygen-evolving complex and a large number of cofactors. It forms dimeric complexes. The cofactor is Binds multiple chlorophylls and provides some of the ligands for the Ca-4Mn-5O cluster of the oxygen-evolving complex. It may also provide a ligand for a Cl- that is required for oxygen evolution. PSII binds additional chlorophylls, carotenoids and specific lipids..

The protein localises to the plastid. Its subcellular location is the chloroplast thylakoid membrane. One of the components of the core complex of photosystem II (PSII). It binds chlorophyll and helps catalyze the primary light-induced photochemical processes of PSII. PSII is a light-driven water:plastoquinone oxidoreductase, using light energy to abstract electrons from H(2)O, generating O(2) and a proton gradient subsequently used for ATP formation. The sequence is that of Photosystem II CP43 reaction center protein from Pyropia yezoensis (Susabi-nori).